Reading from the N-terminus, the 627-residue chain is Phosphomethylpyrimidine synthase (627 aa).

The segment covering 1 to 21 (MSAQQQKNLSESAQVDQQSVQ) has biased composition (polar residues). Residues 1-32 (MSAQQQKNLSESAQVDQQSVQPFPRSQKVYVQ) form a disordered region. Substrate contacts are provided by residues N231, M260, Y289, H325, 345 to 347 (SRG), 386 to 389 (DGLR), and E425. H429 contributes to the Zn(2+) binding site. Y452 lines the substrate pocket. H493 is a Zn(2+) binding site. [4Fe-4S] cluster is bound by residues C573, C576, and C581.

It belongs to the ThiC family. In terms of assembly, homodimer. [4Fe-4S] cluster is required as a cofactor.

It catalyses the reaction 5-amino-1-(5-phospho-beta-D-ribosyl)imidazole + S-adenosyl-L-methionine = 4-amino-2-methyl-5-(phosphooxymethyl)pyrimidine + CO + 5'-deoxyadenosine + formate + L-methionine + 3 H(+). It participates in cofactor biosynthesis; thiamine diphosphate biosynthesis. Functionally, catalyzes the synthesis of the hydroxymethylpyrimidine phosphate (HMP-P) moiety of thiamine from aminoimidazole ribotide (AIR) in a radical S-adenosyl-L-methionine (SAM)-dependent reaction. This Ectopseudomonas mendocina (strain ymp) (Pseudomonas mendocina) protein is Phosphomethylpyrimidine synthase.